We begin with the raw amino-acid sequence, 248 residues long: Proteasome subunit alpha type-5 (248 aa).

It belongs to the peptidase T1A family. As to quaternary structure, the 26S proteasome consists of a 20S proteasome core and two 19S regulatory subunits. The 20S proteasome core is composed of 28 subunits that are arranged in four stacked rings, resulting in a barrel-shaped structure. The two end rings are each formed by seven alpha subunits, and the two central rings are each formed by seven beta subunits. The catalytic chamber with the active sites is on the inside of the barrel.

Its subcellular location is the cytoplasm. It localises to the nucleus. Its function is as follows. The proteasome is a multicatalytic proteinase complex which is characterized by its ability to cleave peptides with Arg, Phe, Tyr, Leu, and Glu adjacent to the leaving group at neutral or slightly basic pH. The proteasome has an ATP-dependent proteolytic activity. In Caenorhabditis elegans, this protein is Proteasome subunit alpha type-5 (pas-5).